The chain runs to 248 residues: Mannose-binding protein C (248 aa).

Residues 1-20 (MSLFPSLTLLLLSVVATSYS) form the signal peptide. Positions 42 to 99 (GINGFPGKDGRDGTKGEKGEPGQGLRGLQGPPGKLGPPGNPGSSGSPGPKGQKGDPGE) constitute a Collagen-like domain. Residues 43–113 (INGFPGKDGR…DSSLAASERK (71 aa)) form a disordered region. Pro-47 bears the 4-hydroxyproline mark. Over residues 49 to 61 (KDGRDGTKGEKGE) the composition is skewed to basic and acidic residues. A 4-hydroxyproline mark is found at Pro-73, Pro-79, Pro-82, and Pro-88. Low complexity predominate over residues 82–91 (PGSSGSPGPK). Residues 112–130 (RKALQTEMARIKKWLTFSL) are a coiled coil. Residues 134-245 (VGNKFFLTNG…CSSSHLALCE (112 aa)) enclose the C-type lectin domain. 2 disulfide bridges follow: Cys-155/Cys-244 and Cys-222/Cys-236.

In terms of assembly, oligomeric complex of 3 or more homotrimers. Interacts with MASP1 and MASP2. Interacts with MEP1A and MEP1B and may inhibit their catalytic activity. Hydroxylation on proline residues within the sequence motif, GXPG, is most likely to be 4-hydroxy as this fits the requirement for 4-hydroxylation in vertebrates.

It is found in the secreted. Calcium-dependent lectin involved in innate immune defense. Binds mannose, fucose and N-acetylglucosamine on different microorganisms and activates the lectin complement pathway. Binds to late apoptotic cells, as well as to apoptotic blebs and to necrotic cells, but not to early apoptotic cells, facilitating their uptake by macrophages. The sequence is that of Mannose-binding protein C (MBL2) from Chlorocebus aethiops (Green monkey).